A 439-amino-acid polypeptide reads, in one-letter code: Putative porin QuiX (439 aa).

The signal sequence occupies residues 1–22; sequence MRHFFKLGLVSAAVLGSQMTLA.

The protein belongs to the OprB family.

The protein resides in the cell outer membrane. Functionally, could be involved in the transport of quinate or shikimate. This Acinetobacter baylyi (strain ATCC 33305 / BD413 / ADP1) protein is Putative porin QuiX (quiX).